We begin with the raw amino-acid sequence, 69 residues long: Mu-conotoxin-like Am3.1 (69 aa).

The signal sequence occupies residues 1–20 (MMSKLRVLLIICLLLFPLTA). A propeptide spanning residues 21–52 (VPLDGDQPADRPAERTQDDISSEHHPMFDAVR) is cleaved from the precursor. The segment at 22–43 (PLDGDQPADRPAERTQDDISSE) is disordered. Over residues 28-43 (PADRPAERTQDDISSE) the composition is skewed to basic and acidic residues. Pro66 bears the 4-hydroxyproline; partial; in minor form mark. Cys68 is modified (cysteine amide).

It belongs to the conotoxin M family. In terms of processing, mostly non-hydroxylated. Post-translationally, contains 3 disulfide bonds. Expressed by the venom duct.

It is found in the secreted. Its function is as follows. Mu-conotoxins block voltage-gated sodium channels (Nav). In Conus amadis (Amadis cone), this protein is Mu-conotoxin-like Am3.1.